A 240-amino-acid polypeptide reads, in one-letter code: MQDPNEDTEWNDVLRAKGIIGPKAKEAEITEDQIQKLMDDAIQRRTDLPLNEGQRDKKIDDMSLDELDELEDSEDEAVLEQYRQRRIAEMRATAEKARFGSVREISGQDYVNEVTKAGEGIWVVLHLYANGVPLCALIHHHMQQLAVRFPQTKFVRSVATTCIPNFPEKNLPTIFIYHEGALRKQYIGPLELRGDKLTAEELEFMLGQAGAVPTEITEDPRPQIRDKMLADLEDKSSDFY.

Positions 54 to 214 (QRDKKIDDMS…MLGQAGAVPT (161 aa)) constitute a Phosducin domain. A phosphoserine mark is found at S63 and S73. The segment at 99-240 (FGSVREISGQ…DLEDKSSDFY (142 aa)) is thioredoxin fold.

The protein belongs to the phosducin family.

The protein localises to the cytoplasm. In terms of biological role, modulates the activation of caspases during apoptosis. The chain is Phosducin-like protein 2 from Drosophila melanogaster (Fruit fly).